The following is a 370-amino-acid chain: Cobalt-precorrin-5B C(1)-methyltransferase (370 aa).

The protein belongs to the CbiD family.

The catalysed reaction is Co-precorrin-5B + S-adenosyl-L-methionine = Co-precorrin-6A + S-adenosyl-L-homocysteine. Its pathway is cofactor biosynthesis; adenosylcobalamin biosynthesis; cob(II)yrinate a,c-diamide from sirohydrochlorin (anaerobic route): step 6/10. Catalyzes the methylation of C-1 in cobalt-precorrin-5B to form cobalt-precorrin-6A. This Trichormus variabilis (strain ATCC 29413 / PCC 7937) (Anabaena variabilis) protein is Cobalt-precorrin-5B C(1)-methyltransferase.